A 147-amino-acid chain; its full sequence is Hemoglobin subunit delta (147 aa).

The Globin domain occupies 3–147; sequence HLTPEEKAAV…VATALAHKYH (145 aa). Residues H64 and H93 each coordinate heme b.

Belongs to the globin family. In terms of assembly, heterotetramer of two delta chains and two alpha chains. Red blood cells.

This Ateles geoffroyi (Black-handed spider monkey) protein is Hemoglobin subunit delta (HBD).